The sequence spans 396 residues: Purine ribonucleoside efflux pump NepI (396 aa).

The Cytoplasmic segment spans residues 1–21; that stretch reads MSEFIAENRGADAITRPNWSA. The helical transmembrane segment at 22 to 42 threads the bilayer; it reads VFSVAFCVACLIIVEFLPVSL. Topologically, residues 43–54 are periplasmic; sequence LTPMAQDLGISE. Residues 55–75 traverse the membrane as a helical segment; that stretch reads GVAGQSVTVTAFVAMFASLFI. Residues 76–85 are Cytoplasmic-facing; the sequence is TQTIQATDRC. The chain crosses the membrane as a helical span at residues 86-106; it reads YVVILFAVLLTLSCLLVSFAN. A topological domain (periplasmic) is located at residue serine 107. The chain crosses the membrane as a helical span at residues 108 to 128; sequence FSLLLIGRACLGLALGGFWAM. The Cytoplasmic portion of the chain corresponds to 129-147; sequence SASLTMRLVPPRTVPKALS. Residues 148 to 168 form a helical membrane-spanning segment; that stretch reads VIFGAVSIALVIAAPLGSFLG. The Periplasmic segment spans residues 169–175; it reads ELIGWRN. A helical membrane pass occupies residues 176–196; the sequence is VFNAAAVMGVLCIFWIIKSLP. Topologically, residues 197 to 215 are cytoplasmic; that stretch reads SLPGEPSHQKQNTFRLLQR. Residues 216–236 form a helical membrane-spanning segment; the sequence is PGVMAGMIAIFMSFAGQFAFF. The Periplasmic portion of the chain corresponds to 237-255; that stretch reads TYIRPVYMNLAGFGVDGLT. A helical transmembrane segment spans residues 256–276; the sequence is LVLLSFGIASFIGTSLSSFIL. At 277–281 the chain is on the cytoplasmic side; that stretch reads KRSVK. The chain crosses the membrane as a helical span at residues 282–302; the sequence is LALAGAPLILAVSALVLTLWG. The Periplasmic portion of the chain corresponds to 303-305; it reads SDK. A helical membrane pass occupies residues 306–326; it reads IVATGVAIIWGLTFALVPVGW. Residues 327–343 lie on the Cytoplasmic side of the membrane; sequence STWITRSLADQAEKAGS. A helical transmembrane segment spans residues 344-364; it reads IQVAVIQLANTCGAAIGGYAL. Topologically, residues 365–366 are periplasmic; sequence DN. Residues 367 to 387 traverse the membrane as a helical segment; sequence IGLTSPLMLSGTLMLLTALLV. Topologically, residues 388 to 396 are cytoplasmic; sequence TAKVKMKKS.

This sequence belongs to the major facilitator superfamily. DHA1 family. NepI (TC 2.A.1.2.26) subfamily.

It is found in the cell inner membrane. The catalysed reaction is inosine(in) + H(+)(out) = inosine(out) + H(+)(in). It carries out the reaction guanosine(in) + H(+)(out) = guanosine(out) + H(+)(in). In terms of biological role, involved in the efflux of purine ribonucleosides, such as inosine and guanosine. This Shigella boydii serotype 4 (strain Sb227) protein is Purine ribonucleoside efflux pump NepI.